Here is a 304-residue protein sequence, read N- to C-terminus: Cell surface-binding protein OPG105 (304 aa).

Residues 1-235 (MPQQLSPINI…NDDTQVYYSG (235 aa)) form the Alpha-carbonic anhydrase domain. The Virion surface portion of the chain corresponds to 1-275 (MPQQLSPINI…YQKYIEGNKT (275 aa)). The helical transmembrane segment at 276–294 (FAIIAIVFVFILTAILFLM) threads the bilayer. Residues 295–304 (SRRYSREKQN) are Intravirion-facing.

The protein belongs to the alpha-carbonic anhydrase family. Homodimer; disulfide-linked. Post-translationally, apparently non-glycosylated.

It localises to the virion membrane. Binds to chondroitin sulfate on the cell surface to provide virion attachment to target cell. The sequence is that of Cell surface-binding protein OPG105 (OPG105) from Vaccinia virus (strain Copenhagen) (VACV).